We begin with the raw amino-acid sequence, 293 residues long: NAD-dependent protein deacetylase (293 aa).

A Deacetylase sirtuin-type domain is found at 1-284 (MTVAITQTGP…QPPDPLHTAT (284 aa)). Residues 27–47 (GAGCSTDSGIPDYRDLQGGWK) and 105–108 (QNVD) contribute to the NAD(+) site. Catalysis depends on His-123, which acts as the Proton acceptor. Zn(2+)-binding residues include Cys-131, Cys-134, Cys-182, and Cys-185. Residues 222 to 224 (GSS), 248 to 250 (NFG), and Cys-266 contribute to the NAD(+) site.

Belongs to the sirtuin family. Class II subfamily. The cofactor is Zn(2+).

It localises to the cytoplasm. The enzyme catalyses N(6)-acetyl-L-lysyl-[protein] + NAD(+) + H2O = 2''-O-acetyl-ADP-D-ribose + nicotinamide + L-lysyl-[protein]. In terms of biological role, NAD-dependent protein deacetylase which modulates the activities of several enzymes which are inactive in their acetylated form. The chain is NAD-dependent protein deacetylase from Xanthomonas campestris pv. campestris (strain 8004).